The sequence spans 120 residues: uncharacterized protein (120 aa).

A coiled-coil region spans residues glutamine 45–aspartate 78.

This is an uncharacterized protein from Bacillus subtilis (strain 168).